A 255-amino-acid polypeptide reads, in one-letter code: Large ribosomal subunit protein uL4 (255 aa).

The protein belongs to the universal ribosomal protein uL4 family. In terms of assembly, part of the 50S ribosomal subunit.

Its function is as follows. One of the primary rRNA binding proteins, this protein initially binds near the 5'-end of the 23S rRNA. It is important during the early stages of 50S assembly. It makes multiple contacts with different domains of the 23S rRNA in the assembled 50S subunit and ribosome. Forms part of the polypeptide exit tunnel. This is Large ribosomal subunit protein uL4 from Thermoplasma volcanium (strain ATCC 51530 / DSM 4299 / JCM 9571 / NBRC 15438 / GSS1).